Reading from the N-terminus, the 158-residue chain is Transcription elongation factor GreA (158 aa).

Residues 48–74 (EYDAAKNRQGFIEGRIKELNDKIARAE) adopt a coiled-coil conformation.

It belongs to the GreA/GreB family.

Necessary for efficient RNA polymerase transcription elongation past template-encoded arresting sites. The arresting sites in DNA have the property of trapping a certain fraction of elongating RNA polymerases that pass through, resulting in locked ternary complexes. Cleavage of the nascent transcript by cleavage factors such as GreA or GreB allows the resumption of elongation from the new 3'terminus. GreA releases sequences of 2 to 3 nucleotides. The protein is Transcription elongation factor GreA of Syntrophotalea carbinolica (strain DSM 2380 / NBRC 103641 / GraBd1) (Pelobacter carbinolicus).